Here is a 473-residue protein sequence, read N- to C-terminus: MNRLLASALLVGSAVVAPVSAACIKNATVTEVDVAIIGGGASGVYAAARLIDNNKTVVVLERNADRIGGQTETYYDPTTGTPVNVGVKVFSNTTVTTDFLKRFDFPMGTLNVGQTLATGTQYVDFATGKLIPNFTAVVPAVQAAAMQRYAAELAKYPQIKFGYNLGPQVPEDLVLPFGKFMEKHNLTGMAQTMFEFNSGYTPLLEIPALYILKYLDTYELQSLQSGSFIVAANGDSATLYRNAAKFLGERVVYGVSGMHIQRSSAAGGRVTISVGNSTTGTHMIRAKKLIVAAPPTLDNLRSTGLDLDTTEAGLFGKLSAGVFYSLVVKDTGVAKANLRNRHPANPYGFPDQPFIYSVIPLPKTSGLAQVLLGSASPLTASQVEARVAADIGRLPASLRGNATSVPKVVTMAAHTWNVMAPVADIKAGFYDKLEGLQGLKDTWYIGAAWATQSSTTIWEGLEQEFLPKLLAAL.

Residues Met1–Ala21 form the signal peptide. 7 N-linked (GlcNAc...) asparagine glycosylation sites follow: Asn26, Asn54, Asn92, Asn133, Asn185, Asn276, and Asn401.

This sequence belongs to the beta-cyclopiazonate dehydrogenase family. It depends on FAD as a cofactor.

It functions in the pathway secondary metabolite biosynthesis; terpenoid biosynthesis. Functionally, FAD-dependent oxidoreductase; part of the gene cluster that mediates the biosynthesis of the diterpenoid pyrones subglutinols A and B. The first step of the pathway is the synthesis of the alpha-pyrone moiety by the polyketide synthase dpasA via condensation of one acetyl-CoA starter unit with 3 malonyl-CoA units and 2 methylations. The alpha-pyrone is then combined with geranylgeranyl pyrophosphate (GGPP) formed by the GGPP synthase dpasD through the action of the prenyltransferase dpasC to yield a linear alpha-pyrone diterpenoid. Subsequent steps in the diterpenoid pyrone biosynthetic pathway involve the decalin core formation, which is initiated by the epoxidation of the C10-C11 olefin by the FAD-dependent oxidoreductase dpasE, and is followed by a cyclization cascade catalyzed by the terpene cyclase dpasB. The FAD-linked oxidoreductase dpasF is then involved in tetrahydrofuran (THF) ring formation at the C5 unit to complete the formation of subglutinols A and B. DpasF possesses also an additional catalytic ability of multi-step oxidations to generate a new DDP analog with an enone system at the C5 named FDDP A. This Apiospora sacchari (Arthrinium sacchari) protein is FAD-dependent oxidoreductase dpasF.